The following is a 424-amino-acid chain: Enolase (424 aa).

Position 162 (glutamine 162) interacts with (2R)-2-phosphoglycerate. The Proton donor role is filled by glutamate 204. Mg(2+) contacts are provided by aspartate 241, glutamate 284, and aspartate 311. (2R)-2-phosphoglycerate-binding residues include lysine 336, arginine 365, serine 366, and lysine 387. The active-site Proton acceptor is the lysine 336.

The protein belongs to the enolase family. It depends on Mg(2+) as a cofactor.

The protein localises to the cytoplasm. The protein resides in the secreted. It is found in the cell surface. The enzyme catalyses (2R)-2-phosphoglycerate = phosphoenolpyruvate + H2O. Its pathway is carbohydrate degradation; glycolysis; pyruvate from D-glyceraldehyde 3-phosphate: step 4/5. Its function is as follows. Catalyzes the reversible conversion of 2-phosphoglycerate (2-PG) into phosphoenolpyruvate (PEP). It is essential for the degradation of carbohydrates via glycolysis. This Agrobacterium fabrum (strain C58 / ATCC 33970) (Agrobacterium tumefaciens (strain C58)) protein is Enolase.